The primary structure comprises 319 residues: Cytochrome f (319 aa).

The signal sequence occupies residues 1-34; it reads MQNRNTYDLKKKMTRLISVLVMIHIITRTSISNA. Positions 35, 55, 58, and 59 each coordinate heme. Residues 285 to 304 traverse the membrane as a helical segment; that stretch reads VKGLLLFLASVILAQIFLVL.

Belongs to the cytochrome f family. The 4 large subunits of the cytochrome b6-f complex are cytochrome b6, subunit IV (17 kDa polypeptide, petD), cytochrome f and the Rieske protein, while the 4 small subunits are PetG, PetL, PetM and PetN. The complex functions as a dimer. Requires heme as cofactor.

The protein resides in the plastid. It localises to the chloroplast thylakoid membrane. In terms of biological role, component of the cytochrome b6-f complex, which mediates electron transfer between photosystem II (PSII) and photosystem I (PSI), cyclic electron flow around PSI, and state transitions. This Picea abies (Norway spruce) protein is Cytochrome f (petA).